The sequence spans 447 residues: Tubulin beta chain (447 aa).

Residues Q11, E69, S138, G142, T143, G144, N204, and N226 each coordinate GTP. E69 is a Mg(2+) binding site. Residues 424 to 447 are disordered; sequence QYQEARSTDSDEYDNEEYYNQQEE. Acidic residues predominate over residues 433–447; that stretch reads SDEYDNEEYYNQQEE.

It belongs to the tubulin family. Dimer of alpha and beta chains. A typical microtubule is a hollow water-filled tube with an outer diameter of 25 nm and an inner diameter of 15 nM. Alpha-beta heterodimers associate head-to-tail to form protofilaments running lengthwise along the microtubule wall with the beta-tubulin subunit facing the microtubule plus end conferring a structural polarity. Microtubules usually have 13 protofilaments but different protofilament numbers can be found in some organisms and specialized cells. It depends on Mg(2+) as a cofactor. As to expression, lens specific.

The protein localises to the cytoplasm. It localises to the cytoskeleton. Functionally, tubulin is the major constituent of microtubules, a cylinder consisting of laterally associated linear protofilaments composed of alpha- and beta-tubulin heterodimers. Microtubules grow by the addition of GTP-tubulin dimers to the microtubule end, where a stabilizing cap forms. Below the cap, tubulin dimers are in GDP-bound state, owing to GTPase activity of alpha-tubulin. In Enteroctopus dofleini (North Pacific giant octopus), this protein is Tubulin beta chain.